A 186-amino-acid polypeptide reads, in one-letter code: Photosystem I assembly protein Ycf4 (186 aa).

2 helical membrane passes run 22-42 (FCWAFILFLGSLGFLLVGTSS) and 57-77 (IIFFPQGIVMSFYGIAGLFIS).

It belongs to the Ycf4 family.

It localises to the plastid. The protein localises to the chloroplast thylakoid membrane. Seems to be required for the assembly of the photosystem I complex. In Vitis vinifera (Grape), this protein is Photosystem I assembly protein Ycf4.